The sequence spans 219 residues: Ras-related protein Rab-3B (219 aa).

Alanine 2 is subject to N-acetylalanine. The GTP site is built by serine 31, serine 32, valine 33, glycine 34, lysine 35, threonine 36, serine 37, proline 49, and serine 53. Threonine 36 is a binding site for Mg(2+). The Switch 1 signature appears at 45–58; that stretch reads DTFTPAFVSTVGID. Mg(2+) is bound by residues threonine 54 and aspartate 77. A Switch 2 motif is present at residues 78 to 96; sequence TAGQERYRTITTAYYRGAM. Residue glycine 80 coordinates GTP. Residue threonine 86 is modified to Phosphothreonine. GTP-binding residues include asparagine 135, lysine 136, aspartate 138, alanine 166, and lysine 167. A phosphoserine mark is found at serine 188 and serine 190. Residues cysteine 217 and cysteine 219 are each lipidated (S-geranylgeranyl cysteine). The residue at position 219 (cysteine 219) is a Cysteine methyl ester.

The protein belongs to the small GTPase superfamily. Rab family. Interacts with RPH3A and RPH3AL. Interacts with RIMS1. Interacts with RIMS2. The GTP-bound form interacts with GAS8/DRC4 (via coiled-coil domains). Interacts with GDI2, and CHM; phosphorylation at Thr-86 disrupts these interactions. Interacts with MADD (via uDENN domain); the GTP-bound form is preferred for interaction. Requires Mg(2+) as cofactor. Phosphorylation of Thr-86 in the switch II region by LRRK2 prevents the association of RAB regulatory proteins, including CHM and RAB GDP dissociation inhibitor GDI2.

The protein localises to the cell membrane. It localises to the golgi apparatus. The catalysed reaction is GTP + H2O = GDP + phosphate + H(+). Its activity is regulated as follows. Regulated by guanine nucleotide exchange factors (GEFs) which promote the exchange of bound GDP for free GTP. Regulated by GTPase activating proteins (GAPs) which increase the GTP hydrolysis activity. Inhibited by GDP dissociation inhibitors (GDIs) which prevent Rab-GDP dissociation. The small GTPases Rab are key regulators of intracellular membrane trafficking, from the formation of transport vesicles to their fusion with membranes. Rabs cycle between an inactive GDP-bound form and an active GTP-bound form that is able to recruit to membranes different sets of downstream effectors directly responsible for vesicle formation, movement, tethering and fusion. This is Ras-related protein Rab-3B from Rattus norvegicus (Rat).